The sequence spans 64 residues: NSGNPCCDPVTCQPRRGEHCVSGKCCRNCKFLRAGTVCKRAVGDDMDDYCTGISSDCPRNPYKD.

Positions 1 to 64 (NSGNPCCDPV…SDCPRNPYKD (64 aa)) constitute a Disintegrin domain. 4 disulfide bridges follow: C6-C29, C20-C26, C25-C50, and C38-C57. Positions 42 to 44 (VGD) match the Cell attachment site; atypical (VGD) motif.

Belongs to the venom metalloproteinase (M12B) family. P-II subfamily. P-IIe sub-subfamily. In terms of assembly, heterodimer with VLO5B; disulfide-linked. Expressed by the venom gland.

It is found in the secreted. Its function is as follows. Poor inhibitor of platelet aggregation. The disintegrin inhibits the adhesion of the alpha-4/beta-1 (ITGA4/ITGB1) integrin to VCAM-1. Inhibition on alpha-IIb/beta-3 (ITGA2B/ITGB3) is low. The protein is Disintegrin VLO5A of Macrovipera lebetina obtusa (Levant blunt-nosed viper).